Reading from the N-terminus, the 571-residue chain is MRALRDRAGLLLCVLLLAALLEAALGLPVKKPRLRGPRPGSLTRLAEVSASPDPRPLKEEEEAPLLPRTHLQAEPHQHGCWTVTEPAAMTPGNATPPRTPEVTPLRLELQKLPGLANTTLSTPNPDTQASASPDPRPLREEEEARLLPRTHLQAELHQHGCWTVTEPAALTPGNATPPRTQEVTPLLLELQKLPELVHATLSTPNPDNQVTIKVVEDPQAEVSIDLLAEPSNPPPQDTLSWLPALWSFLWGDYKGEEKDRAPGEKGEEKEEDEDYPSEDIEGEDQEDKEEDEEEQALWFNGTTDNWDQGWLAPGDWVFKDSVSYDYEPQKEWSPWSPCSGNCSTGKQQRTRPCGYGCTATETRTCDLPSCPGTEDKDTLGLPSEEWKLLARNATDMHDQDVDSCEKWLNCKSDFLIKYLSQMLRDLPSCPCAYPLEAMDSPVSLQDEHQGRSFRWRDASGPRERLDIYQPTARFCLRSMLSGESSTLAAQHCCYDEDSRLLTRGKGAGMPNLISTDFSPKLHFKFDTTPWILCKGDWSRLHAVLPPNNGRACTDNPLEEEYLAQLQEAKEY.

A signal peptide spans methionine 1–glycine 26. 3 disordered regions span residues lysine 30–glutamate 60, alanine 116–glutamate 141, and glutamate 257–glutamate 294. The segment covering alanine 116–alanine 131 has biased composition (polar residues). An N-linked (GlcNAc...) asparagine glycan is attached at asparagine 117. Residues glutamate 257 to glutamate 268 show a composition bias toward basic and acidic residues. A compositionally biased stretch (acidic residues) spans lysine 269–glutamate 294. An N-linked (GlcNAc...) asparagine glycan is attached at asparagine 300. Positions glutamate 327 to proline 371 constitute a TSP type-1 domain. Intrachain disulfides connect cysteine 338-cysteine 365, cysteine 342-cysteine 370, and cysteine 353-cysteine 357. An N-linked (GlcNAc...) asparagine glycan is attached at asparagine 392. The AMOP domain maps to methionine 396–glutamate 559.

It belongs to the isthmin family. As to expression, expressed at high levels in the placenta and at moderate levels in the pancreas, kidney, heart, liver, lung, brain and skeletal muscle.

The protein localises to the secreted. This chain is Isthmin-2 (ISM2), found in Homo sapiens (Human).